Reading from the N-terminus, the 572-residue chain is Methionine--tRNA ligase (572 aa).

Residues 11-21 (PYINGIKHLGN) carry the 'HIGH' region motif. 4 residues coordinate Zn(2+): Cys-143, Cys-146, Cys-156, and Cys-159. Residues 346-350 (QFSTS) carry the 'KMSKS' region motif. Thr-349 serves as a coordination point for ATP.

It belongs to the class-I aminoacyl-tRNA synthetase family. MetG type 1 subfamily. As to quaternary structure, monomer. The cofactor is Zn(2+).

The protein localises to the cytoplasm. The enzyme catalyses tRNA(Met) + L-methionine + ATP = L-methionyl-tRNA(Met) + AMP + diphosphate. Functionally, is required not only for elongation of protein synthesis but also for the initiation of all mRNA translation through initiator tRNA(fMet) aminoacylation. The protein is Methionine--tRNA ligase of Dinoroseobacter shibae (strain DSM 16493 / NCIMB 14021 / DFL 12).